We begin with the raw amino-acid sequence, 955 residues long: 2-oxoglutarate dehydrogenase E1 component (955 aa).

It belongs to the alpha-ketoglutarate dehydrogenase family. Homodimer. Part of the 2-oxoglutarate dehydrogenase (OGDH) complex composed of E1 (2-oxoglutarate dehydrogenase), E2 (dihydrolipoamide succinyltransferase) and E3 (dihydrolipoamide dehydrogenase); the complex contains multiple copies of the three enzymatic components (E1, E2 and E3). Thiamine diphosphate serves as cofactor.

The catalysed reaction is N(6)-[(R)-lipoyl]-L-lysyl-[protein] + 2-oxoglutarate + H(+) = N(6)-[(R)-S(8)-succinyldihydrolipoyl]-L-lysyl-[protein] + CO2. E1 component of the 2-oxoglutarate dehydrogenase (OGDH) complex which catalyzes the decarboxylation of 2-oxoglutarate, the first step in the conversion of 2-oxoglutarate to succinyl-CoA and CO(2). The polypeptide is 2-oxoglutarate dehydrogenase E1 component (Bacillus cereus (strain G9842)).